Consider the following 277-residue polypeptide: Undecaprenyl-diphosphatase (277 aa).

The next 7 helical transmembrane spans lie at 3-23, 44-64, 82-102, 109-129, 188-208, 218-238, and 249-269; these read IALLIKAAIMGVVEGLTEFLP, AKVFDIAIQTGAIFAVILVYW, QFALNVLVAFVPAVVLGLLFG, LFTPVVVASTFVIGGFIILWA, ATDFSFYLAIPTLIGAGVYSL, ADVPLFMVGLVFSFVSAWLCI, and SFIPFAWYRIAFGVVVLATAW.

The protein belongs to the UppP family.

It localises to the cell inner membrane. The enzyme catalyses di-trans,octa-cis-undecaprenyl diphosphate + H2O = di-trans,octa-cis-undecaprenyl phosphate + phosphate + H(+). Catalyzes the dephosphorylation of undecaprenyl diphosphate (UPP). Confers resistance to bacitracin. The polypeptide is Undecaprenyl-diphosphatase (Polaromonas sp. (strain JS666 / ATCC BAA-500)).